The primary structure comprises 314 residues: Hydrolase 4 (314 aa).

Residues 73-75 (HGA) carry the Involved in the stabilization of the negatively charged intermediate by the formation of the oxyanion hole motif. Residues Ser-165 and Asp-260 contribute to the active site.

It belongs to the 'GDXG' lipolytic enzyme family.

It functions in the pathway alkaloid biosynthesis. Its function is as follows. Component of the seco-iridoid and derivatives monoterpenoid indole alkaloids (MIAs, e.g. vincadifformine) biosynthesis pathway. Catalyzes the conversion of O-acetylstemmadenine (OAS) to vincadifformine. May also trigger the formation of additional unknown MIAs. The sequence is that of Hydrolase 4 from Catharanthus roseus (Madagascar periwinkle).